The primary structure comprises 995 residues: MSSHKGDGNDSMSSDEDANEFRSHIQLPRVDLANYRKQHQRGSSKTNIAKAGKKLKGKSVRFPDSYGPRDTILSNSSTTNNSTESSGSSDEECDDPDSRLPSFKFNATDVKGESGDAHEGSDGSSDGGSDDESRGSIKFSDSNDDSDREDERRSRTSRGSVGSSSSKPLKGSDDVNEKETNLDHDYDPQEGGTDITDQWKRTQSVSSSSKSFDGEKHSGIKGIFRKFSLADHHGAHGFSNDYEEPSNSDTFLGRVLSFGSGGGGGGGLIPGASRRSREKEGDEEKEVGGGGEDDGAVEMKRLDFSQLNNEAKKLIAVHVPEAANMDQSFTYDEPNQSAGSSRNSTAPLINPDNAQEADDDHKHTDDEDQGKHGFYAPNLDYIIRGNDDPEDQHLLLDESGEDGYIAPPKQVHAGVLSSLLKLYQNPQDEKSSASLSSRAPSDGKTLAEEQEFGTDMPYHMPTSSLDFTKLKSGPQKLVNKFTHRSNKPQPGKEAEADDEDEDEENPDQAYEKANLPSFQNARPKAPKKTIDPVNVSSKFHKKMKRKKIQQQKLRITVHISDILQRQRFIMMICKALMLYGAPTHRLEEYMTMTSRVLEIDGQFVYFPGCMIVSFGDAATRTSEVHIVRCNQGVNLSKLSDTHTIYKAVIHDLISVDEASQQLETLVRKKNQYSPWLSVFLYGFGSAMVCPFAFGGGWLDIPVTFGVGLCVGYLQFFVSSMSNLYSSVFEITASIVVSFIARGIGSINNSKTFCFSAIAQGSLALILPGYIILCGSLELQSRNIVAGSVRMFYAIIYSLFLGFGITLGAALFGWVYKNSTSDKKCRTSHNVNDKYRILFVPMFTICLGLINQARWRQLPVMMVISCTGYVGTYFAGKHFSNVPEFTAAIGAFIVGILGNVYSRVWKGMAVSAMLPAIFVQVPSGIASQSSLLSGIQSADQITHSNSSSDSSSSDSSSSLSFGSTMVEVSIGISVGLFAAALVVYPFGKRRTGLFTL.

Disordered regions lie at residues Met-1 to His-217, Gly-253 to Met-299, Asp-326 to Pro-407, and Asn-425 to Gln-508. The span at Ser-74–Ser-88 shows a compositional bias: low complexity. The segment covering Val-110 to Ser-121 has biased composition (basic and acidic residues). The segment covering Ser-157–Ser-166 has biased composition (low complexity). Over residues Lys-170–Asp-187 the composition is skewed to basic and acidic residues. Residues Gly-259–Ile-269 show a composition bias toward gly residues. A compositionally biased stretch (acidic residues) spans Glu-283–Ala-296. Residues Asp-326 to Pro-347 show a composition bias toward polar residues. Basic and acidic residues-rich tracts occupy residues Asp-359–Lys-371 and Gly-385–Leu-396. Positions Glu-495–Pro-506 are enriched in acidic residues. The next 10 helical transmembrane spans lie at Val-678–Leu-698, Ile-700–Met-720, Ser-726–Ile-746, Phe-752–Leu-772, Ile-794–Val-814, Lys-833–Asn-850, Pro-858–Phe-878, Val-881–Ser-901, Gly-906–Ser-926, and Val-965–Phe-985.

The protein belongs to the ThrE exporter (TC 2.A.79) family.

It localises to the membrane. This Pichia sorbitophila (strain ATCC MYA-4447 / BCRC 22081 / CBS 7064 / NBRC 10061 / NRRL Y-12695) (Hybrid yeast) protein is Pheromone-regulated membrane protein 10.